We begin with the raw amino-acid sequence, 397 residues long: Homocysteine-responsive endoplasmic reticulum-resident ubiquitin-like domain member 2 protein (397 aa).

The region spanning 10–89 (VTLVIKAPNQ…HMVHLVCASR (80 aa)) is the Ubiquitin-like domain. Disordered regions lie at residues 87-166 (ASRS…MQGG) and 210-246 (APSP…PANP). 2 stretches are compositionally biased toward low complexity: residues 88–123 (SRSP…STPS) and 210–220 (APSPSLSAGPA). A helical membrane pass occupies residues 293 to 313 (FVMVIGAMLLVYLHQAGWFPF). The disordered stretch occupies residues 344 to 373 (DEGIEDDEGDSGEEGPDDPMNPGPHQPGFL). A compositionally biased stretch (acidic residues) spans 345–360 (EGIEDDEGDSGEEGPD).

The protein localises to the membrane. Its function is as follows. Could be involved in the unfolded protein response (UPR) pathway. This chain is Homocysteine-responsive endoplasmic reticulum-resident ubiquitin-like domain member 2 protein (herpud2), found in Danio rerio (Zebrafish).